The primary structure comprises 65 residues: Movement protein TGBp3 (65 aa).

Residues 1–3 (MQA) lie on the Lumenal side of the membrane. Residues 4 to 24 (SGLILVALFSAVVSYLALLHL) form a helical membrane-spanning segment. Residues 25–65 (SSSSSSCVVVVTGESFRISGCDFTEEFIGFAKTLRVANSQP) lie on the Cytoplasmic side of the membrane.

The protein belongs to the Tymovirales TGBp3 protein family.

It is found in the host endoplasmic reticulum membrane. Functionally, plays a role in viral cell-to-cell propagation, by facilitating genome transport to neighboring plant cells through plasmosdesmata. May induce the formation of granular vesicles derived from the Endoplasmic reticulum, which align on actin filaments. This is Movement protein TGBp3 from Carnation latent virus (CLV).